The primary structure comprises 261 residues: UPF0246 protein Daci_5283 (261 aa).

It belongs to the UPF0246 family.

This Delftia acidovorans (strain DSM 14801 / SPH-1) protein is UPF0246 protein Daci_5283.